The sequence spans 339 residues: Aspartate carbamoyltransferase catalytic subunit (339 aa).

Carbamoyl phosphate is bound by residues Arg-59 and Thr-60. Lys-87 contributes to the L-aspartate binding site. Carbamoyl phosphate-binding residues include Arg-109, His-142, and Gln-145. Positions 182 and 253 each coordinate L-aspartate. Positions 294 and 295 each coordinate carbamoyl phosphate.

It belongs to the aspartate/ornithine carbamoyltransferase superfamily. ATCase family. Heterododecamer (2C3:3R2) of six catalytic PyrB chains organized as two trimers (C3), and six regulatory PyrI chains organized as three dimers (R2).

The enzyme catalyses carbamoyl phosphate + L-aspartate = N-carbamoyl-L-aspartate + phosphate + H(+). It functions in the pathway pyrimidine metabolism; UMP biosynthesis via de novo pathway; (S)-dihydroorotate from bicarbonate: step 2/3. Functionally, catalyzes the condensation of carbamoyl phosphate and aspartate to form carbamoyl aspartate and inorganic phosphate, the committed step in the de novo pyrimidine nucleotide biosynthesis pathway. The polypeptide is Aspartate carbamoyltransferase catalytic subunit (Prochlorococcus marinus (strain NATL1A)).